The following is a 150-amino-acid chain: Con-Ins Im1 (150 aa).

The N-terminal stretch at 1 to 25 (MATSLLSPLLVAMLGFLLHVHVARA) is a signal peptide. Intrachain disulfides connect C31–C133, C46–C136, C58–C149, and C135–C140. The propeptide at 64-111 (GYAGGQRQLRKRTSMIDSDDMEAEGGSRGGFLMSKRRALSYLQKETNP) is c peptide. E144 bears the 4-carboxyglutamate; partial mark.

Belongs to the insulin family. As to quaternary structure, heterodimer of A and B chains; disulfide-linked. In terms of tissue distribution, expressed by the venom gland.

It is found in the secreted. In terms of biological role, this venom insulin facilitates prey capture by rapidly inducing hypoglycemic shock. Intraperitoneal injection of this peptide into zebrafish lowers blood glucose with the same potency than human insulin. In vivo, when applied to water, this peptide reduces overall locomotor activity of zebrafish larvae, observed as a significant decrease in the percentage of time spent swimming and movement frequency. The protein is Con-Ins Im1 of Conus imperialis (Imperial cone).